The primary structure comprises 487 residues: Glutamyl-tRNA(Gln) amidotransferase subunit A (487 aa).

Lysine 78 functions as the Charge relay system in the catalytic mechanism. Positions 135–144 (SAYQTTTNPW) are enriched in polar residues. Residues 135–155 (SAYQTTTNPWDASRVPGGSSG) are disordered. The active-site Charge relay system is the serine 153. The active-site Acyl-ester intermediate is serine 177.

The protein belongs to the amidase family. GatA subfamily. As to quaternary structure, heterotrimer of A, B and C subunits.

The catalysed reaction is L-glutamyl-tRNA(Gln) + L-glutamine + ATP + H2O = L-glutaminyl-tRNA(Gln) + L-glutamate + ADP + phosphate + H(+). Its function is as follows. Allows the formation of correctly charged Gln-tRNA(Gln) through the transamidation of misacylated Glu-tRNA(Gln) in organisms which lack glutaminyl-tRNA synthetase. The reaction takes place in the presence of glutamine and ATP through an activated gamma-phospho-Glu-tRNA(Gln). In Maridesulfovibrio salexigens (strain ATCC 14822 / DSM 2638 / NCIMB 8403 / VKM B-1763) (Desulfovibrio salexigens), this protein is Glutamyl-tRNA(Gln) amidotransferase subunit A.